Here is a 255-residue protein sequence, read N- to C-terminus: ATP synthase subunit b 1 (255 aa).

Residues 5 to 22 form a helical membrane-spanning segment; that stretch reads WITVAAQIVNFLLLIWLL.

This sequence belongs to the ATPase B chain family. In terms of assembly, F-type ATPases have 2 components, F(1) - the catalytic core - and F(0) - the membrane proton channel. F(1) has five subunits: alpha(3), beta(3), gamma(1), delta(1), epsilon(1). F(0) has three main subunits: a(1), b(2) and c(10-14). The alpha and beta chains form an alternating ring which encloses part of the gamma chain. F(1) is attached to F(0) by a central stalk formed by the gamma and epsilon chains, while a peripheral stalk is formed by the delta and b chains.

The protein resides in the cell inner membrane. In terms of biological role, f(1)F(0) ATP synthase produces ATP from ADP in the presence of a proton or sodium gradient. F-type ATPases consist of two structural domains, F(1) containing the extramembraneous catalytic core and F(0) containing the membrane proton channel, linked together by a central stalk and a peripheral stalk. During catalysis, ATP synthesis in the catalytic domain of F(1) is coupled via a rotary mechanism of the central stalk subunits to proton translocation. Functionally, component of the F(0) channel, it forms part of the peripheral stalk, linking F(1) to F(0). The polypeptide is ATP synthase subunit b 1 (Dinoroseobacter shibae (strain DSM 16493 / NCIMB 14021 / DFL 12)).